A 421-amino-acid polypeptide reads, in one-letter code: uncharacterized protein (421 aa).

This is an uncharacterized protein from Bacillus subtilis (strain 168).